Consider the following 470-residue polypeptide: Glutamate--tRNA ligase (470 aa).

A 'HIGH' region motif is present at residues 12-22 (PSPTGIFHVGG). Residues Cys103, Cys105, Cys125, and Asp127 each contribute to the Zn(2+) site. Residues 236-240 (KLSKR) carry the 'KMSKS' region motif. Lys239 contributes to the ATP binding site.

The protein belongs to the class-I aminoacyl-tRNA synthetase family. Glutamate--tRNA ligase type 1 subfamily. As to quaternary structure, monomer. Zn(2+) serves as cofactor.

It is found in the cytoplasm. The catalysed reaction is tRNA(Glu) + L-glutamate + ATP = L-glutamyl-tRNA(Glu) + AMP + diphosphate. Catalyzes the attachment of glutamate to tRNA(Glu) in a two-step reaction: glutamate is first activated by ATP to form Glu-AMP and then transferred to the acceptor end of tRNA(Glu). This is Glutamate--tRNA ligase from Frankia casuarinae (strain DSM 45818 / CECT 9043 / HFP020203 / CcI3).